The chain runs to 78 residues: Beta-defensin 29 (78 aa).

Residues 1–23 (MPVTKSYFMTVVVVLILVDETTG) form the signal peptide. 3 cysteine pairs are disulfide-bonded: C40–C67, C47–C61, and C51–C68.

The protein belongs to the beta-defensin family. Highly expressed in the cauda epididymis.

The protein resides in the secreted. In terms of biological role, has antibacterial activity. This is Beta-defensin 29 (Defb29) from Mus musculus (Mouse).